Consider the following 666-residue polypeptide: Probable potassium transport system protein Kup (666 aa).

Transmembrane regions (helical) follow at residues 16–36 (GFII…LYTM), 58–78 (ISLI…LIAL), 100–120 (PWLI…GALT), 141–161 (IYQN…VLFG), 165–185 (FGTG…FSFL), 221–241 (IFIL…YSDL), 253–273 (WPFV…WILA), 292–312 (LTVY…QALI), 343–363 (LYIP…VLYF), 373–393 (YGLA…YYLI), 399–419 (PFLA…FFWA), and 424–444 (FMHG…VMFI).

Belongs to the HAK/KUP transporter (TC 2.A.72) family.

Its subcellular location is the cell membrane. It carries out the reaction K(+)(in) + H(+)(in) = K(+)(out) + H(+)(out). Functionally, transport of potassium into the cell. Likely operates as a K(+):H(+) symporter. The chain is Probable potassium transport system protein Kup from Streptococcus pyogenes serotype M5 (strain Manfredo).